The following is a 152-amino-acid chain: Ninjurin-1 (152 aa).

The residue at position 1 (Met-1) is an N-acetylmethionine. The disordered stretch occupies residues 1-26; sequence MDSGTEEYELNGGLPPGTPGSPDASP. Topologically, residues 1 to 78 are extracellular; that stretch reads MDSGTEEYEL…EQGPSFAFYV (78 aa). Ser-21 and Ser-25 each carry phosphoserine. Residues 26 to 37 are N-terminal adhesion motif; the sequence is PARWGWRHGPIN. A required to induce plasma membrane rupture region spans residues 40-69; sequence HYASKKSAAESMLDIALLMANASQLKAVVE. Positions 44 to 55 are helix alpha1; that stretch reads KKSAAESMLDIA. A helix alpha2 region spans residues 58 to 74; the sequence is MANASQLKAVVEQGPSF. A glycan (N-linked (GlcNAc...) asparagine) is linked at Asn-60. A helical transmembrane segment spans residues 79 to 103; the sequence is PLVVLISISLVLQIGVGVLLIFLVK. Over 104–113 the chain is Cytoplasmic; the sequence is YDLNNPAKHA. A helical transmembrane segment spans residues 114–138; the sequence is KLDFLNNLATGLVFIIVVVNIFITA. The Extracellular portion of the chain corresponds to 139–152; sequence FGVQKPLMDMAPQQ.

This sequence belongs to the ninjurin family. As to quaternary structure, homodimer; in absence of death stimuli, forms an inactive homodimer. Homooligomer; in response to death stimuli, homooligomerizes into long, highly branched filaments and large, ring-shaped structures in the membrane. Post-translationally, cleaved by MMP9 protease to generate the Secreted ninjurin-1 form. In terms of processing, N-linked glycosylation is required for homooligomerization. Widely expressed in both adult and embryonic tissues, primarily those of epithelial origin.

It localises to the cell membrane. It is found in the synaptic cell membrane. The protein resides in the secreted. With respect to regulation, in response to death stimuli, homooligomerizes and disrupts membrane integrity by introducing the hydrophilic faces of alpha1 and alpha2 helices into the hydrophobic membrane. Homooligomerization and ability to mediate plasma membrane rupture is inhibited by glycine; it is unclear whether glycine directly or indirectly inhibits homooligomerization. In normal conditions, NINJ1 is autoinhibited via formation of a homodimer: in the inactive homodimer, the alpha1 and alpha2 helices (residues 44-74) form a single transmembrane region without a kink, in which hydrophilic faces of alpha1 and alpha2 helices are sequestered. Functionally, effector of various programmed cell death, such as pyroptosis and necroptosis, which mediates plasma membrane rupture (cytolysis). Oligomerizes in response to death stimuli and forms ring-like structures on the plasma membrane: acts by cutting and shedding membrane disks, like a cookie cutter, leading to membrane damage and loss that cannot be repaired by the cell. Plasma membrane rupture leads to release intracellular molecules named damage-associated molecular patterns (DAMPs) that propagate the inflammatory response. Mechanistically, mediates plasma membrane rupture by introducing hydrophilic faces of 2 alpha helices into the hydrophobic membrane. Induces plasma membrane rupture downstream of Gasdermin (GSDMA, GSDMB, GSDMC, GSDMD, or GSDME) or MLKL during pyroptosis or necroptosis, respectively. Acts as an effector of PANoptosis downstream of CASP1, CASP4, CASP8 and RIPK3. Also induces plasma membrane rupture in response to cell swelling caused by osmotic stress and ferroptosis downstream of lipid peroxidation. Acts as a regulator of Toll-like receptor 4 (TLR4) signaling triggered by lipopolysaccharide (LPS) during systemic inflammation; directly binds LPS. Involved in leukocyte migration during inflammation by promoting transendothelial migration of macrophages via homotypic binding. Promotes the migration of monocytes across the brain endothelium to central nervous system inflammatory lesions. Also acts as a homophilic transmembrane adhesion molecule involved in various processes such as axonal growth, cell chemotaxis and angiogenesis. Promotes cell adhesion by mediating homophilic interactions via its extracellular N-terminal adhesion motif (N-NAM). Involved in the progression of the inflammatory stress by promoting cell-to-cell interactions between immune cells and endothelial cells. Plays a role in nerve regeneration by promoting maturation of Schwann cells. Acts as a regulator of angiogenesis. Promotes the formation of new vessels by mediating the interaction between capillary pericyte cells and endothelial cells. Promotes osteoclasts development by enhancing the survival of prefusion osteoclasts. Also involved in striated muscle growth and differentiation. In terms of biological role, secreted form generated by cleavage, which has chemotactic activity. Acts as an anti-inflammatory mediator by promoting monocyte recruitment, thereby ameliorating atherosclerosis. This is Ninjurin-1 from Homo sapiens (Human).